The primary structure comprises 310 residues: Adenylyl-sulfate kinase 4, chloroplastic (310 aa).

Residues 1-75 (MDVAAMARCV…MAKDESISSR (75 aa)) constitute a chloroplast transit peptide. 116–124 (GLSGSGKSS) serves as a coordination point for ATP. Substrate contacts are provided by residues D146, R149, R163, N166, 189–190 (IS), and G239. Residue S190 is the Phosphoserine intermediate of the active site.

The protein belongs to the APS kinase family. Homodimer; disulfide-linked. Expressed in root vasculature, root tips, leaf epidermal and guard cells, pollen grains and radicle of immature seeds.

The protein localises to the plastid. It is found in the chloroplast. It carries out the reaction adenosine 5'-phosphosulfate + ATP = 3'-phosphoadenylyl sulfate + ADP + H(+). It functions in the pathway sulfur metabolism; hydrogen sulfide biosynthesis; sulfite from sulfate: step 2/3. In terms of biological role, catalyzes the phosphorylation of adenosine 5'-phosphosulfate to 3'-phosphoadenylyl sulfate, which is the activated sulfate form for sulfation reactions. Essential for plant reproduction and viability. The protein is Adenylyl-sulfate kinase 4, chloroplastic (APK4) of Arabidopsis thaliana (Mouse-ear cress).